Here is a 375-residue protein sequence, read N- to C-terminus: o-succinylbenzoate synthase (375 aa).

Lys-166 acts as the Proton donor in catalysis. Residues Asp-191, Glu-216, and Asp-241 each contribute to the Mg(2+) site. Lys-265 serves as the catalytic Proton acceptor.

The protein belongs to the mandelate racemase/muconate lactonizing enzyme family. MenC type 2 subfamily. As to quaternary structure, homotetramer. A divalent metal cation is required as a cofactor.

The catalysed reaction is (1R,6R)-6-hydroxy-2-succinyl-cyclohexa-2,4-diene-1-carboxylate = 2-succinylbenzoate + H2O. It catalyses the reaction N-acetyl-D-methionine = N-acetyl-L-methionine. The protein operates within quinol/quinone metabolism; 1,4-dihydroxy-2-naphthoate biosynthesis; 1,4-dihydroxy-2-naphthoate from chorismate: step 4/7. It functions in the pathway quinol/quinone metabolism; menaquinone biosynthesis. In terms of biological role, converts 2-succinyl-6-hydroxy-2,4-cyclohexadiene-1-carboxylate (SHCHC) to 2-succinylbenzoate (OSB). Also acts as a N-succinylamino acid racemase (NSAR) that catalyzes the racemization of N-succinyl-D/L-phenylalanine. Can catalyze the racemization of a broad range of N-acylamino acids, including N-acetyl-D-methionine, N-formyl-D/L-methionine, N-formyl-D/L-norleucine, N-formyl-D/L-aminobutyric acid, N-formyl-D/L-norvaline, N-formyl-D/L-homophenylalanine, N-carbamoyl-D-methionine and N-carbamoyl-D-norleucine. May be a bifunctional enzyme involved in menaquinone biosynthesis and in an irreversible pathway for the conversion of D- to L-amino acids, thereby facilitating the survival and/or growth of the organism. In Geobacillus stearothermophilus (Bacillus stearothermophilus), this protein is o-succinylbenzoate synthase.